The sequence spans 257 residues: Imidazole glycerol phosphate synthase subunit HisF (257 aa).

Catalysis depends on residues Asp-12 and Asp-131.

It belongs to the HisA/HisF family. As to quaternary structure, heterodimer of HisH and HisF.

The protein resides in the cytoplasm. It catalyses the reaction 5-[(5-phospho-1-deoxy-D-ribulos-1-ylimino)methylamino]-1-(5-phospho-beta-D-ribosyl)imidazole-4-carboxamide + L-glutamine = D-erythro-1-(imidazol-4-yl)glycerol 3-phosphate + 5-amino-1-(5-phospho-beta-D-ribosyl)imidazole-4-carboxamide + L-glutamate + H(+). It participates in amino-acid biosynthesis; L-histidine biosynthesis; L-histidine from 5-phospho-alpha-D-ribose 1-diphosphate: step 5/9. IGPS catalyzes the conversion of PRFAR and glutamine to IGP, AICAR and glutamate. The HisF subunit catalyzes the cyclization activity that produces IGP and AICAR from PRFAR using the ammonia provided by the HisH subunit. This chain is Imidazole glycerol phosphate synthase subunit HisF, found in Burkholderia mallei (strain NCTC 10247).